The following is a 61-amino-acid chain: MPIINVKLLEGRSDEQLKDLVTEVTHAVEKTTGANKEAIHVVIEEMRKDHYAVGGVRKSDQ.

Catalysis depends on Pro2, which acts as the Proton acceptor; via imino nitrogen.

This sequence belongs to the 4-oxalocrotonate tautomerase family.

This is Probable tautomerase SERP0934 from Staphylococcus epidermidis (strain ATCC 35984 / DSM 28319 / BCRC 17069 / CCUG 31568 / BM 3577 / RP62A).